Reading from the N-terminus, the 171-residue chain is UPF0763 protein KHP_0657 (171 aa).

Belongs to the UPF0763 family.

The chain is UPF0763 protein KHP_0657 from Helicobacter pylori (strain 51).